A 55-amino-acid chain; its full sequence is Large ribosomal subunit protein bL33 (55 aa).

Belongs to the bacterial ribosomal protein bL33 family.

The chain is Large ribosomal subunit protein bL33 from Deinococcus deserti (strain DSM 17065 / CIP 109153 / LMG 22923 / VCD115).